We begin with the raw amino-acid sequence, 320 residues long: tRNA dimethylallyltransferase (320 aa).

10–17 is an ATP binding site; that stretch reads GPTASGKT. A substrate-binding site is contributed by 12–17; sequence TASGKT. 3 interaction with substrate tRNA regions span residues 35 to 38, 159 to 163, and 241 to 246; these read DSAL, QRIQR, and RCVGYR.

This sequence belongs to the IPP transferase family. As to quaternary structure, monomer. The cofactor is Mg(2+).

The catalysed reaction is adenosine(37) in tRNA + dimethylallyl diphosphate = N(6)-dimethylallyladenosine(37) in tRNA + diphosphate. Catalyzes the transfer of a dimethylallyl group onto the adenine at position 37 in tRNAs that read codons beginning with uridine, leading to the formation of N6-(dimethylallyl)adenosine (i(6)A). This Aromatoleum aromaticum (strain DSM 19018 / LMG 30748 / EbN1) (Azoarcus sp. (strain EbN1)) protein is tRNA dimethylallyltransferase.